The primary structure comprises 162 residues: UPF0114 protein Shewmr4_0646 (162 aa).

The next 4 helical transmembrane spans lie at 15-35, 53-73, 108-128, and 136-156; these read IMAP…IKFF, LVLV…IVMV, KVAA…FMDV, and IMWY…MGYL.

The protein belongs to the UPF0114 family.

It localises to the cell membrane. The protein is UPF0114 protein Shewmr4_0646 of Shewanella sp. (strain MR-4).